Reading from the N-terminus, the 250-residue chain is MFRATCNTRDFKKVINATSNLVDEICFEVDENGIKASAMDPSHVALVSMEMPKDVFEEYEGDIQDIGIDLEALKKIIARGRGDEKLILDLDTEKNKLNVTFKSNVTRKFSIALYDVSSSNLKVPDIEYPNSVSIKAGAFVEALKDAELVNDHITLKIDEDKFIIYSKGDLNQSETVFDNSIEDDDNALAEFNMGEASRSTFNLAYLKDLTKSTAAEDLLKIYLGSDMPVKIEYEVSGSKLVFLLAPRIES.

It belongs to the PCNA family. Homotrimer. The subunits circularize to form a toroid; DNA passes through its center. Replication factor C (RFC) is required to load the toroid on the DNA.

Its function is as follows. Sliding clamp subunit that acts as a moving platform for DNA processing. Responsible for tethering the catalytic subunit of DNA polymerase and other proteins to DNA during high-speed replication. The sequence is that of DNA polymerase sliding clamp from Methanococcus maripaludis (strain C7 / ATCC BAA-1331).